Reading from the N-terminus, the 182-residue chain is ATP synthase subunit delta (182 aa).

The protein belongs to the ATPase delta chain family. F-type ATPases have 2 components, F(1) - the catalytic core - and F(0) - the membrane proton channel. F(1) has five subunits: alpha(3), beta(3), gamma(1), delta(1), epsilon(1). F(0) has three main subunits: a(1), b(2) and c(10-14). The alpha and beta chains form an alternating ring which encloses part of the gamma chain. F(1) is attached to F(0) by a central stalk formed by the gamma and epsilon chains, while a peripheral stalk is formed by the delta and b chains.

Its subcellular location is the cell membrane. F(1)F(0) ATP synthase produces ATP from ADP in the presence of a proton or sodium gradient. F-type ATPases consist of two structural domains, F(1) containing the extramembraneous catalytic core and F(0) containing the membrane proton channel, linked together by a central stalk and a peripheral stalk. During catalysis, ATP synthesis in the catalytic domain of F(1) is coupled via a rotary mechanism of the central stalk subunits to proton translocation. In terms of biological role, this protein is part of the stalk that links CF(0) to CF(1). It either transmits conformational changes from CF(0) to CF(1) or is implicated in proton conduction. This Desulforudis audaxviator (strain MP104C) protein is ATP synthase subunit delta.